The chain runs to 31 residues: Cuticle protein 54 (31 aa).

2 repeat units span residues 7–10 (AAPA) and 13–17 (AAPAI).

Functionally, component of the cuticle of migratory locust which contains more than 100 different structural proteins. The protein is Cuticle protein 54 of Locusta migratoria (Migratory locust).